A 255-amino-acid polypeptide reads, in one-letter code: Imidazole glycerol phosphate synthase subunit HisF (255 aa).

Residues Asp13 and Asp132 contribute to the active site.

This sequence belongs to the HisA/HisF family. In terms of assembly, heterodimer of HisH and HisF.

It localises to the cytoplasm. It carries out the reaction 5-[(5-phospho-1-deoxy-D-ribulos-1-ylimino)methylamino]-1-(5-phospho-beta-D-ribosyl)imidazole-4-carboxamide + L-glutamine = D-erythro-1-(imidazol-4-yl)glycerol 3-phosphate + 5-amino-1-(5-phospho-beta-D-ribosyl)imidazole-4-carboxamide + L-glutamate + H(+). The protein operates within amino-acid biosynthesis; L-histidine biosynthesis; L-histidine from 5-phospho-alpha-D-ribose 1-diphosphate: step 5/9. In terms of biological role, IGPS catalyzes the conversion of PRFAR and glutamine to IGP, AICAR and glutamate. The HisF subunit catalyzes the cyclization activity that produces IGP and AICAR from PRFAR using the ammonia provided by the HisH subunit. This is Imidazole glycerol phosphate synthase subunit HisF from Leptospira biflexa serovar Patoc (strain Patoc 1 / ATCC 23582 / Paris).